A 369-amino-acid chain; its full sequence is Probable serine/threonine-protein kinase DDB_G0291350 (369 aa).

A Protein kinase domain is found at 22–367 (YTVNRILGEG…QVIERINQII (346 aa)). Residues 28–36 (LGEGGFSFV) and Lys-51 each bind ATP. The Proton acceptor role is filled by Asp-159. The disordered stretch occupies residues 169–225 (NLRRPSNNNNNNNNNNNNNNNNNNNNNNNNNNNNNNNNNNNNNNNNNNNNNNNSEDS). Residues 175-221 (NNNNNNNNNNNNNNNNNNNNNNNNNNNNNNNNNNNNNNNNNNNNNNN) are compositionally biased toward low complexity.

This sequence belongs to the protein kinase superfamily. Ser/Thr protein kinase family.

It catalyses the reaction L-seryl-[protein] + ATP = O-phospho-L-seryl-[protein] + ADP + H(+). The catalysed reaction is L-threonyl-[protein] + ATP = O-phospho-L-threonyl-[protein] + ADP + H(+). In Dictyostelium discoideum (Social amoeba), this protein is Probable serine/threonine-protein kinase DDB_G0291350.